The primary structure comprises 424 residues: CinA-like protein (424 aa).

This sequence belongs to the CinA family.

The polypeptide is CinA-like protein (Shewanella amazonensis (strain ATCC BAA-1098 / SB2B)).